A 96-amino-acid polypeptide reads, in one-letter code: Venom protein 3.1 (96 aa).

The first 25 residues, 1 to 25 (MKFSLISVFLFAVFLSNENIFQAIA), serve as a signal peptide directing secretion. Residues 45–84 (EAVMSSSLTNEEESRNWPHRATRNTLEKGQKRSPAARSEI) are disordered.

This sequence belongs to the non-disulfide-bridged peptide (NDBP) superfamily. As to expression, expressed by the venom gland.

The protein localises to the secreted. The protein is Venom protein 3.1 of Lychas mucronatus (Chinese swimming scorpion).